The primary structure comprises 224 residues: MPDNPTGTLPEIILASASPRRRQILSEMGFIFSVCPSQAELYPDGSVAPAEFAVLNAQIKARDIASKYSNGLIIAADTIVVDDFGILGKPSSKKVALNYLSRLGGKPHTVISSVCLLNTENGQIRSATCQSTLTMRPYTQAEAQRYVDSGLPMDKAGAYGIQDKEFNPVENIQGCYLNVVGLPACTLVRLINEMGFNPKLARNWKPEGDCTLCRIYRTEISRLR.

The Proton acceptor role is filled by Asp77.

Belongs to the Maf family. YhdE subfamily. The cofactor is a divalent metal cation.

It localises to the cytoplasm. It catalyses the reaction dTTP + H2O = dTMP + diphosphate + H(+). The enzyme catalyses UTP + H2O = UMP + diphosphate + H(+). In terms of biological role, nucleoside triphosphate pyrophosphatase that hydrolyzes dTTP and UTP. May have a dual role in cell division arrest and in preventing the incorporation of modified nucleotides into cellular nucleic acids. This chain is dTTP/UTP pyrophosphatase, found in Dehalococcoides mccartyi (strain ATCC BAA-2100 / JCM 16839 / KCTC 5957 / BAV1).